Reading from the N-terminus, the 220-residue chain is Ribosomal RNA large subunit methyltransferase E (220 aa).

S-adenosyl-L-methionine is bound by residues G64, W66, D84, D100, and D125. The Proton acceptor role is filled by K165.

Belongs to the class I-like SAM-binding methyltransferase superfamily. RNA methyltransferase RlmE family.

It is found in the cytoplasm. It carries out the reaction uridine(2552) in 23S rRNA + S-adenosyl-L-methionine = 2'-O-methyluridine(2552) in 23S rRNA + S-adenosyl-L-homocysteine + H(+). Specifically methylates the uridine in position 2552 of 23S rRNA at the 2'-O position of the ribose in the fully assembled 50S ribosomal subunit. The polypeptide is Ribosomal RNA large subunit methyltransferase E (Thiobacillus denitrificans (strain ATCC 25259 / T1)).